A 214-amino-acid chain; its full sequence is Putative F-box protein At3g58910 (214 aa).

The 47-residue stretch at 1–47 (MDRVSSLPDELLCHILSFLTTKETALTSLLSKREIIPLIKSVVFPTL) folds into the F-box domain.

The protein is Putative F-box protein At3g58910 of Arabidopsis thaliana (Mouse-ear cress).